Reading from the N-terminus, the 533-residue chain is Probable RNA-binding protein 46 (533 aa).

3 consecutive RRM domains span residues 61-139, 141-223, and 236-308; these read CEVF…VSLD, CRLF…WADP, and KVLY…LAKP.

In terms of assembly, interacts with YTHDC2, MEIOC, MOV10, CNOT6L, DDX4, UPF1 and PABPC1.

It is found in the cytoplasm. Essential for male and female fertility, playing a crucial role in regulating germ cell development by ensuring the proper progression of meiosis prophase I. Regulates mitotic-to-meiotic transition in spermatogenesis by forming a complex with MEIOC and YTHDC2 which recognizes and down-regulates mitotic transcripts for a successful meiotic entry. Required for normal synaptonemal complex formation during meiosis, binding meiotic cohesin subunit mRNAs containing GCCUAU/GUUCGA motifs in their 3'UTRs regions and positively regulating their translation. Required for spermatogonial differentiation in both developing and adult testis. The polypeptide is Probable RNA-binding protein 46 (RBM46) (Homo sapiens (Human)).